A 202-amino-acid chain; its full sequence is MKTLLFIYLQLLLLLSIIIGRVVKVEYLHLVVEVEPSTITESCLSDGIDGYSGSFYLNTTFAELMLKEHNNKRKLHQSCPLKWSSELFNYASQFAAEYSCSGILQHSGGKYGENLAFGYSPIGAIEAWYDEGEMYVYGSENVYNHFTAIVWNNTNSLGCAYKSCDTTTNLNALYIVCSYYPPGNVIGYSSQNVFPLNSKMVN.

Residues M1–G20 form the signal peptide. N-linked (GlcNAc...) asparagine glycosylation is found at N58 and N152. Residues L66 to Y179 enclose the SCP domain.

The protein belongs to the CRISP family.

It localises to the secreted. Secreted protein that acts as a virulence factor during infections. The chain is Probable pathogenesis-related protein CaO19.2336 from Candida albicans (strain SC5314 / ATCC MYA-2876) (Yeast).